The following is a 385-amino-acid chain: MLYYLIDYIERLYHPPGFQVIRFITVRAALASITALGIALGAGRGIIRWLRQQQLGEQVREGEAAGAISHAHKAGTPTMGGIIILLSVGGATLLWGAVANTYVWLSLVAMGGLGVVGFADDYVKTVRKQKDGLNAWYKVAGQVAVGLFVGSVLYFHPDFAAYNTFTFIPFLKDQVLDYDLFRFLELGVDLGWLVYLPVVVFIVTAVSNAVNLTDGLDGLTTGVTAFVSLGLVALVYVSGNAEFATFLNVMHLPGTGELTVFVAAVTAACFGFLWYNGYPATVFMGDTGALALGGAVGSTILMVRKELLLPLLGIVYFAEALSVIVQTSYFKYTRRRTGTGKRVFRMAPLHHHYEARGLHEAKIVTRFWIVTAITVIAALLILRIR.

The next 10 helical transmembrane spans lie at 23–43, 79–99, 103–123, 135–155, 186–206, 218–238, 258–278, 282–302, 307–327, and 362–382; these read FITV…LGAG, MGGI…GAVA, VWLS…DDYV, AWYK…VLYF, LGVD…VTAV, GLTT…VYVS, LTVF…YNGY, VFMG…TILM, LLLP…IVQT, and KIVT…LLIL.

It belongs to the glycosyltransferase 4 family. MraY subfamily. Mg(2+) is required as a cofactor.

The protein resides in the cell inner membrane. The enzyme catalyses UDP-N-acetyl-alpha-D-muramoyl-L-alanyl-gamma-D-glutamyl-meso-2,6-diaminopimeloyl-D-alanyl-D-alanine + di-trans,octa-cis-undecaprenyl phosphate = di-trans,octa-cis-undecaprenyl diphospho-N-acetyl-alpha-D-muramoyl-L-alanyl-D-glutamyl-meso-2,6-diaminopimeloyl-D-alanyl-D-alanine + UMP. It participates in cell wall biogenesis; peptidoglycan biosynthesis. Functionally, catalyzes the initial step of the lipid cycle reactions in the biosynthesis of the cell wall peptidoglycan: transfers peptidoglycan precursor phospho-MurNAc-pentapeptide from UDP-MurNAc-pentapeptide onto the lipid carrier undecaprenyl phosphate, yielding undecaprenyl-pyrophosphoryl-MurNAc-pentapeptide, known as lipid I. The protein is Phospho-N-acetylmuramoyl-pentapeptide-transferase of Salinibacter ruber (strain DSM 13855 / M31).